Here is a 1024-residue protein sequence, read N- to C-terminus: MTMITDSLAVVLQRRDWENPGVTQLNRLAAHPPFASWRNSEEARTDRPSQQLRSLNGEWRFAWFPAPEAVPESWLECDLPEADTVVVPSNWQMHGYDAPIYTNVTYPITVNPPFVPTENPTSCYSLTFNVDESWLQEGQTRIIFDGVNSAFHLWCNGRWVGYGQDSRLPSEFDLSAFLRAGKNRLAVMVLRWSDGSYLEDQDMWRMSGIFRDVSLLHKPTTQISDFHVATRFNDDFSRAVLEAEVQMCGELRDYLRVTVSLWQGETQVASGTAPFGGEIIDERGGYADRVTLRLNVENPKLWSAEIPNLYRAVVELHTADGTLIEAEACDVGFREVRIENGLLLLNGKPLLIRGVNRHEHHPLHGQVMDEQTMVQDILLMKQNNFNAVRCSHYPNHPLWYTLCDRYGLYVVDEANIETHGMVPMNRLTDDPRWLPAMSERVTRMVQRDRNHPSVIIWSLGNESGHGANHDALYRWIKSVDPSRPVQYEGGGADTTATDIICPMYARVDEDQPFPAVPKWSIKKWLSLPGETRPLILCEYAHAMGNSLGGFAKYWQAFRQYPRLQGGFVWDWVDQSLIKYDENGNPWSAYGGDFGDTPNDRQFCMNGLVFADRTPHPALTEAKHQQQFFQFRLSGQTIEVTSEYLFRHSDNELLHWMVALDGKPLASGEVPLDVAPQGKQLIELPELPQPESAGQLWLTVRVVQPNATAWSEAGHISAWQQWRLAENLSVTLPAASHAIPHLTTSEMDFCIELGNKRWQFNRQSGFLSQMWIGDKKQLLTPLRDQFTRAPLDNDIGVSEATRIDPNAWVERWKAAGHYQAEAALLQCTADTLADAVLITTAHAWQHQGKTLFISRKTYRIDGSGQMAITVDVEVASDTPHPARIGLNCQLAQVAERVNWLGLGPQENYPDRLTAACFDRWDLPLSDMYTPYVFPSENGLRCGTRELNYGPHQWRGDFQFNISRYSQQQLMETSHRHLLHAEEGTWLNIDGFHMGIGGDDSWSPSVSAEFQLSAGRYHYQLVWCQK.

Substrate-binding residues include asparagine 103 and aspartate 202. A Na(+)-binding site is contributed by aspartate 202. The Mg(2+) site is built by glutamate 417, histidine 419, and glutamate 462. Substrate-binding positions include glutamate 462 and 538 to 541 (EYAH). Glutamate 462 (proton donor) is an active-site residue. The active-site Nucleophile is the glutamate 538. Asparagine 598 contributes to the Mg(2+) binding site. Na(+) is bound by residues phenylalanine 602 and asparagine 605. Positions 605 and 1000 each coordinate substrate.

This sequence belongs to the glycosyl hydrolase 2 family. In terms of assembly, homotetramer. Mg(2+) serves as cofactor. Requires Na(+) as cofactor.

The catalysed reaction is Hydrolysis of terminal non-reducing beta-D-galactose residues in beta-D-galactosides.. The polypeptide is Beta-galactosidase (Escherichia coli (strain ATCC 8739 / DSM 1576 / NBRC 3972 / NCIMB 8545 / WDCM 00012 / Crooks)).